The chain runs to 237 residues: 1-(5-phosphoribosyl)-5-[(5-phosphoribosylamino)methylideneamino] imidazole-4-carboxamide isomerase (237 aa).

Asp-8 acts as the Proton acceptor in catalysis. Asp-127 serves as the catalytic Proton donor.

It belongs to the HisA/HisF family.

Its subcellular location is the cytoplasm. The enzyme catalyses 1-(5-phospho-beta-D-ribosyl)-5-[(5-phospho-beta-D-ribosylamino)methylideneamino]imidazole-4-carboxamide = 5-[(5-phospho-1-deoxy-D-ribulos-1-ylimino)methylamino]-1-(5-phospho-beta-D-ribosyl)imidazole-4-carboxamide. It participates in amino-acid biosynthesis; L-histidine biosynthesis; L-histidine from 5-phospho-alpha-D-ribose 1-diphosphate: step 4/9. This Sulfurovum sp. (strain NBC37-1) protein is 1-(5-phosphoribosyl)-5-[(5-phosphoribosylamino)methylideneamino] imidazole-4-carboxamide isomerase.